The following is a 202-amino-acid chain: Glycoprotein U22 (202 aa).

Positions 1–20 (MVPQGCSLVWVSALYVSVIA) are cleaved as a signal peptide. Asn54, Asn107, Asn112, and Asn125 each carry an N-linked (GlcNAc...) asparagine; by host glycan. The helical transmembrane segment at 172-192 (FVYYCISVYLFAVVVLCSCWF) threads the bilayer.

It is found in the membrane. The chain is Glycoprotein U22 (U22) from Homo sapiens (Human).